Here is a 339-residue protein sequence, read N- to C-terminus: Phosphate acyltransferase (339 aa).

Belongs to the PlsX family. As to quaternary structure, homodimer. Probably interacts with PlsY.

It is found in the cytoplasm. The catalysed reaction is a fatty acyl-[ACP] + phosphate = an acyl phosphate + holo-[ACP]. It functions in the pathway lipid metabolism; phospholipid metabolism. Its function is as follows. Catalyzes the reversible formation of acyl-phosphate (acyl-PO(4)) from acyl-[acyl-carrier-protein] (acyl-ACP). This enzyme utilizes acyl-ACP as fatty acyl donor, but not acyl-CoA. The chain is Phosphate acyltransferase from Aeromonas salmonicida (strain A449).